A 277-amino-acid polypeptide reads, in one-letter code: Alternative cytochrome c oxidase subunit 2 (277 aa).

The Periplasmic segment spans residues 1–40 (MAVALILLLIAIGSVLFHLFSPWWWTPIATNWGYIDDTIN). The helical transmembrane segment at 41-61 (ITFWITGFVFTAVILFMAYCV) threads the bilayer. Residues 62–83 (FRFHHKEGRQAAYNPENKKLEW) lie on the Cytoplasmic side of the membrane. A helical membrane pass occupies residues 84–104 (WLSVGTGVGVAAMLAPGLVVW). Over 105–277 (HQFVTVPADA…VRAKYNSGDD (173 aa)) the chain is Periplasmic. Cu cation-binding residues include His190, Cys225, Cys229, and His233.

Belongs to the cytochrome c oxidase subunit 2 family.

Its subcellular location is the cell membrane. The enzyme catalyses 4 Fe(II)-[cytochrome c] + O2 + 8 H(+)(in) = 4 Fe(III)-[cytochrome c] + 2 H2O + 4 H(+)(out). Its function is as follows. Cytochrome c oxidase is the component of the respiratory chain that catalyzes the reduction of oxygen to water. Subunits 1-3 form the functional core of the enzyme complex. Subunit 2 transfers the electrons from cytochrome c via its binuclear copper A center to the bimetallic center of the catalytic subunit 1. The chain is Alternative cytochrome c oxidase subunit 2 (coxM) from Bradyrhizobium diazoefficiens (strain JCM 10833 / BCRC 13528 / IAM 13628 / NBRC 14792 / USDA 110).